We begin with the raw amino-acid sequence, 162 residues long: Blue copper protein 1b (162 aa).

Residues Met-1–Ala-23 form the signal peptide. The 101-residue stretch at Thr-25–Ala-125 folds into the Phytocyanin domain. His-65 serves as a coordination point for Cu cation. The N-linked (GlcNAc...) asparagine glycan is linked to Asn-71. A disulfide bridge connects residues Cys-78 and Cys-112. Residues Cys-106, His-111, and Met-117 each coordinate Cu cation. Residues Val-142 to Ala-162 traverse the membrane as a helical segment.

The protein localises to the membrane. The protein is Blue copper protein 1b of Medicago truncatula (Barrel medic).